Reading from the N-terminus, the 116-residue chain is ATP-dependent Clp protease adapter protein ClpS (116 aa).

Residues 1 to 11 (MRRFNTIMQGK) are compositionally biased toward polar residues. The interval 1–23 (MRRFNTIMQGKTNGGNGPESGTV) is disordered.

It belongs to the ClpS family. In terms of assembly, binds to the N-terminal domain of the chaperone ClpA.

Its function is as follows. Involved in the modulation of the specificity of the ClpAP-mediated ATP-dependent protein degradation. The sequence is that of ATP-dependent Clp protease adapter protein ClpS from Brucella melitensis biotype 2 (strain ATCC 23457).